Consider the following 517-residue polypeptide: Gallate 1-beta-glucosyltransferase 84A24 (517 aa).

The active-site Proton acceptor is His19. Position 19 (His19) interacts with an anthocyanidin. Residues Gln344, His359, Trp362, Asn363, Ser364, and Glu367 each contribute to the UDP-alpha-D-glucose site. An an anthocyanidin-binding site is contributed by Gly382. Positions 383 and 384 each coordinate UDP-alpha-D-glucose.

The protein belongs to the UDP-glycosyltransferase family. Highly expressed in leaf. Also expressed in peel, stem, root and aril.

It localises to the cytoplasm. The catalysed reaction is 3,4,5-trihydroxybenzoate + UDP-alpha-D-glucose = 1-O-galloyl-beta-D-glucose + UDP. The enzyme catalyses 3,4-dihydroxybenzoate + UDP-alpha-D-glucose = 1-O-(3,4-dihydroxy-benzoyl)-beta-D-glucose + UDP. It catalyses the reaction 4-hydroxybenzoate + UDP-alpha-D-glucose = 4-(beta-D-glucosyloxy)benzoate + UDP + H(+). It carries out the reaction (E)-cinnamate + UDP-alpha-D-glucose = 1-O-(trans-cinnamoyl)-beta-D-glucose + UDP. The catalysed reaction is (E)-sinapate + UDP-alpha-D-glucose = 1-O-(trans-sinapoyl)-beta-D-glucose + UDP. The enzyme catalyses (E)-4-coumarate + UDP-alpha-D-glucose = 1-O-(trans-4-coumaroyl)-beta-D-glucose + UDP. It catalyses the reaction (E)-caffeate + UDP-alpha-D-glucose = 1-O-[(E)-caffeoyl]-beta-D-glucose + UDP. It carries out the reaction (E)-ferulate + UDP-alpha-D-glucose = 1-O-[(E)-feruloyl]-beta-D-glucose + UDP. The catalysed reaction is genistein + UDP-alpha-D-glucose = genistein 7-O-beta-D-glucoside + UDP + H(+). The enzyme catalyses apigenin + UDP-alpha-D-glucose = apigenin 7-O-beta-D-glucoside + UDP + H(+). It catalyses the reaction luteolin + UDP-alpha-D-glucose = luteolin 7-O-beta-D-glucoside + UDP + H(+). In terms of biological role, glucosyltransferase that catalyzes the formation of 1-O-beta-D-glucose esters with hydroxybenzoic acids and cinnamic acid including its derivatives as preferred glucosyl acceptors. Has significant activity with gallic acid (3,4,5-trihydroxybenzoic acid), 3,4-dihydroxybenzoic acid, 4-hydroxybenzoic acid, cinnamic acid, sinapic acid, coumaric acid, caffeic acid and ferulic acid in vitro. Gallic acid is the predicted native substrate of the enzyme, which thus catalyzes the formation of 1-O-galloyl-beta-D-glucose, the first committed step of hydrolyzable tannins (HTs) biosynthesis, with punicalagin isomers being the major HTs of pomegranate. Catalyzes the formation of flavonoid glucosides with genistein, apigenin and luteolin in vitro. Has low activity with benzoic acid, 2-hydroxybenzoic acid, 3-hydroxybenzoic acid, 2,4-dihydroxybenzoic acid, naringenin and quercetin. No activity with catechol, resveratrol, chlorogenic acid, catechin and epicatechin (building blocks of proanthocyanidins) or cyanidin, delphinidin and pelargonidin (the three anthocyanidins). This is Gallate 1-beta-glucosyltransferase 84A24 from Punica granatum (Pomegranate).